The sequence spans 494 residues: Metal cation symporter ZIP14 (494 aa).

The signal sequence occupies residues 1-34 (MTLRRASGCRQLTLTIGLALTLGLLQWPIGDVRG). Residues 35–152 (QDGASPAQVL…PTEAEVWGYG (118 aa)) lie on the Extracellular side of the membrane. The helical transmembrane segment at 153–173 (LLCVTVISLCSLVGASVVPFM) threads the bilayer. Residues 174–181 (RKTFYKRL) are Cytoplasmic-facing. Residues 182–202 (LLYFIALAIGTLYSNALFQLI) traverse the membrane as a helical segment. At 203–219 (PEAFGFDPMEDYYVPKS) the chain is on the extracellular side. A helical membrane pass occupies residues 220–240 (AVVFGGFYLFFFTEKILKMIL). The Cytoplasmic segment spans residues 241 to 397 (KPKDTGGHGH…LLNAGMSIQQ (157 aa)). The HHHGHXHX-motif motif lies at 248-255 (HGHGHSHF). The XEXPHE-motif motif lies at 376–381 (EEFPHE). A helical membrane pass occupies residues 398–418 (ALFFNFLSACCCYLGMGFGIL). The Extracellular portion of the chain corresponds to 419–426 (AGNNFSPN). A helical transmembrane segment spans residues 427 to 447 (WIFALAGGMFLYIALADMFPE). At 448-462 (MNEVSREEEEAGGSG) the chain is on the cytoplasmic side. The helical transmembrane segment at 463 to 483 (FLLTFALQNAGLLTGFAIMLV) threads the bilayer. The Extracellular portion of the chain corresponds to 484 to 494 (LTIYSGQIQLG).

The protein belongs to the ZIP transporter (TC 2.A.5) family. As to quaternary structure, homotrimer.

It localises to the cell membrane. Its subcellular location is the apical cell membrane. The protein localises to the basolateral cell membrane. It is found in the early endosome membrane. The protein resides in the late endosome membrane. It localises to the lysosome membrane. It catalyses the reaction Zn(2+)(out) + 2 hydrogencarbonate(out) = Zn(2+)(in) + 2 hydrogencarbonate(in). The enzyme catalyses Mn(2+)(out) + 2 hydrogencarbonate(out) = Mn(2+)(in) + 2 hydrogencarbonate(in). The catalysed reaction is Fe(2+)(out) + 2 hydrogencarbonate(out) = Fe(2+)(in) + 2 hydrogencarbonate(in). It carries out the reaction Cd(2+)(out) + 2 hydrogencarbonate(out) = Cd(2+)(in) + 2 hydrogencarbonate(in). Its function is as follows. Broad-scope metal ion transporter with a preference for zinc uptake. Also mediates cellular uptake of nontransferrin-bound iron. Electroneutral transporter of the plasma membrane mediating the cellular uptake of the divalent metal cations zinc, manganese and iron that are important for tissue homeostasis, metabolism, development and immunity. Functions as an energy-dependent symporter, transporting through the membranes an electroneutral complex composed of a divalent metal cation and two bicarbonate anions. Beside these endogenous cellular substrates, can also import cadmium a non-essential metal which is cytotoxic and carcinogenic. In Danio rerio (Zebrafish), this protein is Metal cation symporter ZIP14.